The primary structure comprises 126 residues: Large ribosomal subunit protein bL20c (126 aa).

Belongs to the bacterial ribosomal protein bL20 family.

It is found in the plastid. The protein localises to the chloroplast. Functionally, binds directly to 23S ribosomal RNA and is necessary for the in vitro assembly process of the 50S ribosomal subunit. It is not involved in the protein synthesizing functions of that subunit. This chain is Large ribosomal subunit protein bL20c, found in Guizotia abyssinica (Niger).